We begin with the raw amino-acid sequence, 297 residues long: Ribosomal RNA small subunit methyltransferase A (297 aa).

Asparagine 31, leucine 33, glycine 58, glutamate 79, aspartate 104, and asparagine 129 together coordinate S-adenosyl-L-methionine.

This sequence belongs to the class I-like SAM-binding methyltransferase superfamily. rRNA adenine N(6)-methyltransferase family. RsmA subfamily.

It localises to the cytoplasm. The enzyme catalyses adenosine(1518)/adenosine(1519) in 16S rRNA + 4 S-adenosyl-L-methionine = N(6)-dimethyladenosine(1518)/N(6)-dimethyladenosine(1519) in 16S rRNA + 4 S-adenosyl-L-homocysteine + 4 H(+). In terms of biological role, specifically dimethylates two adjacent adenosines (A1518 and A1519) in the loop of a conserved hairpin near the 3'-end of 16S rRNA in the 30S particle. May play a critical role in biogenesis of 30S subunits. In Staphylococcus aureus (strain MRSA252), this protein is Ribosomal RNA small subunit methyltransferase A.